A 240-amino-acid chain; its full sequence is Vesicle-associated membrane protein 727 (240 aa).

Residues 1 to 215 (MSQKGLIYSF…MWLQSLQMKL (215 aa)) lie on the Cytoplasmic side of the membrane. Positions 6–133 (LIYSFVAKGT…NLDREFGPIL (128 aa)) constitute a Longin domain. The v-SNARE coiled-coil homology domain occupies 149–209 (KLSKLKAQIT…RQLRRKMWLQ (61 aa)). Residues 216–236 (MVAGAVFSFILIVWVVACGGF) traverse the membrane as a helical; Anchor for type IV membrane protein segment. Residues 237–240 (KCSS) are Vesicular-facing.

This sequence belongs to the synaptobrevin family. As to quaternary structure, interacts with subunits of the class C core vacuole/endosome tethering (CORVET) complex including VPS11, VCL1, VPS18, VPS33, VPS3 and VPS8. In terms of tissue distribution, highly expressed in flowers. Detected in leaves, stems and roots.

Its subcellular location is the early endosome membrane. The protein localises to the endosome membrane. Its function is as follows. Involved in the targeting and/or fusion of transport vesicles to their target membrane. The protein is Vesicle-associated membrane protein 727 (VAMP727) of Arabidopsis thaliana (Mouse-ear cress).